A 482-amino-acid polypeptide reads, in one-letter code: tRNA sulfurtransferase (482 aa).

Residues 61 to 165 (AEVLEILTHT…NDRLNQVLAS (105 aa)) form the THUMP domain. ATP-binding positions include 183 to 184 (LI), Lys-265, Gly-287, and Gln-296. Cys-344 and Cys-456 form a disulfide bridge. The Rhodanese domain occupies 404-482 (VEEHAIVLDI…GFNNVKVYRP (79 aa)). Cys-456 serves as the catalytic Cysteine persulfide intermediate.

Belongs to the ThiI family.

It localises to the cytoplasm. The catalysed reaction is [ThiI sulfur-carrier protein]-S-sulfanyl-L-cysteine + a uridine in tRNA + 2 reduced [2Fe-2S]-[ferredoxin] + ATP + H(+) = [ThiI sulfur-carrier protein]-L-cysteine + a 4-thiouridine in tRNA + 2 oxidized [2Fe-2S]-[ferredoxin] + AMP + diphosphate. It carries out the reaction [ThiS sulfur-carrier protein]-C-terminal Gly-Gly-AMP + S-sulfanyl-L-cysteinyl-[cysteine desulfurase] + AH2 = [ThiS sulfur-carrier protein]-C-terminal-Gly-aminoethanethioate + L-cysteinyl-[cysteine desulfurase] + A + AMP + 2 H(+). It functions in the pathway cofactor biosynthesis; thiamine diphosphate biosynthesis. Catalyzes the ATP-dependent transfer of a sulfur to tRNA to produce 4-thiouridine in position 8 of tRNAs, which functions as a near-UV photosensor. Also catalyzes the transfer of sulfur to the sulfur carrier protein ThiS, forming ThiS-thiocarboxylate. This is a step in the synthesis of thiazole, in the thiamine biosynthesis pathway. The sulfur is donated as persulfide by IscS. This is tRNA sulfurtransferase from Vibrio campbellii (strain ATCC BAA-1116).